The chain runs to 406 residues: MSKLYVGSEVGQLRRVLLNRPERALTHLTPSNCHELLFDDVLLVEAAGKEHDAFADTLRQQGVEVLLLHDLMVDTLAVPEAKQWLLDVQISDFRYGPIFARDLRRYLSEMDNEHLATILLGGLAYSELPIQSASMLPRMKQPLDFVIEPLPNHLFTRDTSCWVYGGVSLNPMMKPARQRETNHLRAIYQWHPIFAGQDFIKYFGNEDLHYDNANIEGGDVLVIGKGAVLIGMSERTTPQGVENLAANLFKHGQAKEVIAIELPKHRSCMHLDTVMTHMDVDTFSVYPEIMRKDLHTWRLTPKGNGEMQVEALHNYLHAIERALGLNHLNIITTGGDSYEAEREQWNDANNVLTVKPGVVIGYERNVYTNEKYDKAGIEVLTIPGNELGRGRGGARCMSCPIERDDI.

Cys396 (amidino-cysteine intermediate) is an active-site residue.

This sequence belongs to the arginine deiminase family.

It localises to the cytoplasm. The catalysed reaction is L-arginine + H2O = L-citrulline + NH4(+). The protein operates within amino-acid degradation; L-arginine degradation via ADI pathway; carbamoyl phosphate from L-arginine: step 1/2. The polypeptide is Arginine deiminase (Vibrio vulnificus (strain CMCP6)).